A 5207-amino-acid polypeptide reads, in one-letter code: NBPF family member NBPF20 (5207 aa).

64 Olduvai domains span residues 5-77 (SREL…PSCP), 80-135 (SREL…LDVD), 136-228 (RTKK…RSKK), 229-321 (ERRR…PSCP), 324-379 (SREL…LDVD), 380-472 (RTKK…RSKK), 473-565 (ERRR…PSCP), 568-623 (SREL…LDVD), 624-716 (RTKK…RSKK), 717-809 (ERRR…PSCP), 812-867 (SREL…LDVD), 868-960 (RTKK…RSKK), 961-1053 (ERRR…PSCP), 1056-1111 (SREL…LDVD), 1112-1204 (RTKK…RSKK), 1205-1297 (ERRR…PSCP), 1300-1355 (SREL…LDVD), 1356-1448 (RTKK…RSKK), 1449-1541 (ERRR…PSCP), 1544-1599 (SREL…LDVD), 1600-1692 (RTKK…RSKK), 1693-1785 (ERRR…PSCP), 1788-1843 (SREL…LDVD), 1844-1936 (RTKK…RSKK), 1937-2029 (ERRR…PSCP), 2032-2087 (SREL…LDVD), 2088-2180 (RTKK…RSKK), 2181-2273 (ERRR…PSCP), 2276-2331 (SREL…LDVD), 2332-2424 (RTKK…RSKK), 2425-2517 (ERRR…PSCP), 2520-2575 (SREL…LDVD), 2576-2668 (RTKK…RSKK), 2669-2761 (ERRR…PSCP), 2764-2819 (SREL…LDVD), 2820-2912 (RTKK…RSKK), 2913-3005 (ERRR…PSCP), 3008-3063 (SREL…LDVD), 3064-3156 (RTKK…RSKK), 3157-3249 (ERRR…PSCP), 3252-3307 (SREL…LDVD), 3308-3400 (RTKK…RSKK), 3401-3493 (ERRR…PSCP), 3496-3551 (SREL…LDVD), 3552-3644 (RTKK…RSKK), 3645-3737 (ERRR…PSCP), 3740-3795 (SREL…LDVD), 3796-3888 (RTKK…RSKK), 3889-3981 (ERRR…PSCP), 3984-4039 (SREL…LDVD), 4040-4132 (RTKK…RSKK), 4133-4225 (ERRR…PSCP), 4228-4283 (SREL…LDVD), 4284-4376 (RTKK…RSKK), 4377-4452 (ERRR…LDVD), 4453-4545 (RTKK…RSKK), 4546-4621 (ERRR…LDVD), 4622-4713 (RTKK…PSCP), 4716-4771 (SREL…LDVD), 4772-4864 (RTKK…RSKK), 4865-4957 (ERRR…PSCP), 4960-5015 (SREL…LDVD), 5016-5108 (RTKK…RSKK), and 5109-5207 (KRRR…IFPQ). Disordered regions lie at residues 137 to 157 (TKKD…LSRE) and 215 to 256 (KGKG…LDEK). Positions 216–234 (GKGKKRRGRRSKKERRRGR) are enriched in basic residues. Disordered stretches follow at residues 381–403 (TKKD…RELL) and 459–513 (KGKG…DRSY). Basic residues predominate over residues 460-478 (GKGKKRRGRRSKKERRRGR). Residues 492-502 (LSRELLDEKGP) are compositionally biased toward basic and acidic residues. 2 disordered regions span residues 625 to 647 (TKKD…RELL) and 703 to 744 (KGKG…LDEK). The span at 704–722 (GKGKKRRGRRSKKERRRGR) shows a compositional bias: basic residues. Disordered stretches follow at residues 869–891 (TKKD…RELL) and 947–1001 (KGKG…DRSY). Positions 948-966 (GKGKKRRGRRSKKERRRGR) are enriched in basic residues. Positions 980–990 (LSRELLDEKGP) are enriched in basic and acidic residues. 2 disordered regions span residues 1113-1135 (TKKD…RELL) and 1191-1245 (KGKG…DRSY). Residues 1192–1210 (GKGKKRRGRRSKKERRRGR) are compositionally biased toward basic residues. The segment covering 1224–1234 (LSRELLDEKGP) has biased composition (basic and acidic residues). Disordered stretches follow at residues 1357-1379 (TKKD…RELL) and 1435-1489 (KGKG…DRSY). The segment covering 1436–1454 (GKGKKRRGRRSKKERRRGR) has biased composition (basic residues). Over residues 1468–1478 (LSRELLDEKGP) the composition is skewed to basic and acidic residues. 2 disordered regions span residues 1601–1623 (TKKD…RELL) and 1679–1733 (KGKG…DRSY). A compositionally biased stretch (basic residues) spans 1680–1698 (GKGKKRRGRRSKKERRRGR). The segment covering 1712–1722 (LSRELLDEKGP) has biased composition (basic and acidic residues). Disordered stretches follow at residues 1845–1867 (TKKD…RELL) and 1923–1964 (KGKG…LDEK). Residues 1924-1942 (GKGKKRRGRRSKKERRRGR) show a composition bias toward basic residues. Disordered stretches follow at residues 2089-2111 (TKKD…RELL) and 2167-2208 (KGKG…LDEK). Over residues 2168–2186 (GKGKKRRGRRSKKERRRGR) the composition is skewed to basic residues. Disordered stretches follow at residues 2333-2355 (TKKD…RELL) and 2411-2452 (KGKG…LDEK). Basic residues predominate over residues 2412–2430 (GKGKKRRGRRSKKERRRGR). Disordered stretches follow at residues 2577-2599 (TKKD…RELL) and 2655-2709 (KGKG…DRSY). Residues 2656–2674 (GKGKKRRGRRSKKERRRGR) show a composition bias toward basic residues. Over residues 2688–2698 (LSRELLDEKGP) the composition is skewed to basic and acidic residues. Disordered stretches follow at residues 2821-2843 (TKKD…RELL) and 2899-2953 (KGKG…DRSY). Basic residues predominate over residues 2900–2918 (GKGKKRRGRRSKKERRRGR). Residues 2932–2942 (LSRELLDEKGP) are compositionally biased toward basic and acidic residues. Disordered regions lie at residues 3065 to 3087 (TKKD…RELL) and 3143 to 3197 (KGKG…DRSY). The segment covering 3144 to 3162 (GKGKKRRGRRSKKERRRGR) has biased composition (basic residues). A compositionally biased stretch (basic and acidic residues) spans 3176-3186 (LSRELLDEKGP). Disordered regions lie at residues 3309–3331 (TKKD…RELL) and 3387–3441 (KGKG…DRSY). Positions 3388–3406 (GKGKKRRGRRSKKERRRGR) are enriched in basic residues. Residues 3420 to 3430 (LSRELLDEKGP) show a composition bias toward basic and acidic residues. 2 disordered regions span residues 3553–3575 (TKKD…RELL) and 3631–3672 (KGKG…LDEK). A compositionally biased stretch (basic residues) spans 3632 to 3650 (GKGKKRRGRRSKKERRRGR). Disordered stretches follow at residues 3797 to 3819 (TKKD…RELL) and 3875 to 3916 (KGKG…LDEK). The segment covering 3876 to 3894 (GKGKKRRGRRSKKERRRGR) has biased composition (basic residues). 2 disordered regions span residues 4041 to 4063 (TKKD…RELL) and 4119 to 4160 (KGKG…LDEK). Basic residues predominate over residues 4120-4138 (GKGKKRRGRRSKKERRRGR). Disordered regions lie at residues 4285–4307 (TKKD…RELL), 4361–4404 (EKKG…LDEK), 4453–4474 (RTKK…LSRE), and 4530–4573 (EKKG…LDEK). Residues 4364-4382 (GKGKKRRGRRSKKERRRGR) show a composition bias toward basic residues. Over residues 4533–4551 (GKGKKRRGRRSKKERRRGR) the composition is skewed to basic residues. Disordered regions lie at residues 4773 to 4793 (TKKD…LSRE) and 4851 to 4889 (KGKG…RELL). Basic residues predominate over residues 4852 to 4870 (GKGKKRRGRRSKKERRRGR). 2 disordered regions span residues 5017 to 5037 (TKKD…LSRE) and 5094 to 5128 (KKGK…CPRL). Over residues 5096–5114 (GKGKKRRGRRSKKKRRRGR) the composition is skewed to basic residues.

This sequence belongs to the NBPF family.

It is found in the cytoplasm. This Homo sapiens (Human) protein is NBPF family member NBPF20.